The sequence spans 150 residues: Photosystem I reaction center subunit XI (150 aa).

At 1-72 (MSDFIQSYNN…DKLGPLRNTD (72 aa)) the chain is on the stromal side. Residues 73 to 93 (VALLSGFLSAVGLIIILTVCL) traverse the membrane as a helical segment. Topologically, residues 94-118 (SMYGNVSFDKDDAKDLLQTTEGWGQ) are lumenal. Residues 119-139 (FTAGFLVGAVGGSGFAYLLLA) form a helical membrane-spanning segment. Residues 140 to 150 (NIPVLQNLGLS) are Stromal-facing.

The protein belongs to the PsaL family.

It is found in the plastid. It localises to the chloroplast thylakoid membrane. The protein is Photosystem I reaction center subunit XI of Gracilaria tenuistipitata var. liui (Red alga).